Consider the following 380-residue polypeptide: Alpha-glucoside transport system permease protein AglG (380 aa).

6 consecutive transmembrane segments (helical) span residues 13-33 (VHLSVLLLVLLWTLPTAGLLI), 179-199 (VIPILIAAFAAYALAWMPFPG), 202-222 (VLLAVVVGLLVVPLQMSLIPL), 239-259 (TYMGIWLAHTGFGLPLAIYLL), 288-308 (IILPLSFPALASFAIFQFLWT), and 344-364 (EILTASAFITIVVPLIVFFAL). An ABC transmembrane type-1 domain is found at 167-364 (FLNSLTVAVP…VVPLIVFFAL (198 aa)).

The protein belongs to the binding-protein-dependent transport system permease family. MalFG subfamily.

The protein localises to the cell inner membrane. Its function is as follows. Part of the binding-protein-dependent transport system for alpha-glucosides such as sucrose, maltose and trehalose. Probably responsible for the translocation of the substrate across the membrane. The protein is Alpha-glucoside transport system permease protein AglG (aglG) of Rhizobium meliloti (strain 1021) (Ensifer meliloti).